Here is a 153-residue protein sequence, read N- to C-terminus: Ribosomal RNA large subunit methyltransferase H (153 aa).

2 residues coordinate S-adenosyl-L-methionine: Leu-71 and Gly-102.

It belongs to the RNA methyltransferase RlmH family. Homodimer.

The protein localises to the cytoplasm. It catalyses the reaction pseudouridine(1915) in 23S rRNA + S-adenosyl-L-methionine = N(3)-methylpseudouridine(1915) in 23S rRNA + S-adenosyl-L-homocysteine + H(+). Its function is as follows. Specifically methylates the pseudouridine at position 1915 (m3Psi1915) in 23S rRNA. This chain is Ribosomal RNA large subunit methyltransferase H, found in Anaeromyxobacter dehalogenans (strain 2CP-1 / ATCC BAA-258).